Here is a 448-residue protein sequence, read N- to C-terminus: Neurexin-1b-beta (448 aa).

The signal sequence occupies residues 1-38 (MFGGWRLVVWQIFSEIITRRLGFWICLYFAALSVGMIS). At 39-375 (GSEPLVRTRH…EVFRESNGTT (337 aa)) the chain is on the extracellular side. One can recognise a Laminin G-like domain in the interval 71-269 (STYVFGRQGG…DPNVRMEGSV (199 aa)). A helical membrane pass occupies residues 376–396 (GMVVGIVAGAALCILILLYAM). The Cytoplasmic segment spans residues 397 to 448 (YKYRNRDEGSYHVDESRNYICNSNGAALKEKNTADDDSGSKSKKNKNKEYYV). A compositionally biased stretch (basic and acidic residues) spans 426-436 (EKNTADDDSGS). The tract at residues 426–448 (EKNTADDDSGSKSKKNKNKEYYV) is disordered.

Belongs to the neurexin family.

The protein resides in the membrane. Functionally, neuronal cell surface protein that may be involved in cell recognition and cell adhesion. May play a role in formation or maintenance of synaptic junctions. The protein is Neurexin-1b-beta (nrxn1b) of Danio rerio (Zebrafish).